Consider the following 318-residue polypeptide: MDARSELHHYNPYRVFSRSEWANLRQDTPMTLDLAEVSTLRSLHDRLDITEVEEIYLPMSRLLSIHVGAMQQLYYAQRRFLGVVERKMPYIIGVAGSVAVGKSTTARVLQALLARWSPRPKVDLITTDGFLHPNALLERAGLMQKKGFPESYDLPALLAFLSDIKSGRRKVRAPIYSHLTYDIVPNKFAVVDRPDILIVEGVNVLQTGRLPRDGKAVPVVSDFFDFSVYIDADEPVLRDWYIRRFLALRDTAFHDPRSYFHRYAPLSDEEATATAIAIWERTNLANLEDNILPTRPRATLILKKGADHVVDSVALRRL.

Position 96–103 (96–103) interacts with ATP; sequence GSVAVGKS.

It belongs to the prokaryotic pantothenate kinase family.

It is found in the cytoplasm. It catalyses the reaction (R)-pantothenate + ATP = (R)-4'-phosphopantothenate + ADP + H(+). Its pathway is cofactor biosynthesis; coenzyme A biosynthesis; CoA from (R)-pantothenate: step 1/5. The polypeptide is Pantothenate kinase (Rhodopseudomonas palustris (strain BisB5)).